The chain runs to 122 residues: MIQLRSIINVADNSGARKVQCFKVRGGHHRDIATLGDVIMCSVRDAIPTSSIKKGDVVRAVVVRVAREKRRKDGSYIRFDENAVCIINENGEPKGTRVFGPIARELRDKNFLKIISLAPEVI.

The protein belongs to the universal ribosomal protein uL14 family. In terms of assembly, part of the 50S ribosomal subunit. Forms a cluster with proteins L3 and L19. In the 70S ribosome, L14 and L19 interact and together make contacts with the 16S rRNA in bridges B5 and B8.

Functionally, binds to 23S rRNA. Forms part of two intersubunit bridges in the 70S ribosome. The protein is Large ribosomal subunit protein uL14 of Elusimicrobium minutum (strain Pei191).